Consider the following 240-residue polypeptide: Cysteine-rich venom protein triflin (240 aa).

The N-terminal stretch at 1–19 (MIAFIVLPILAAVLQQSSG) is a signal peptide. The 128-residue stretch at 39-166 (DLHNSLRRSV…KYSYFYVCQY (128 aa)) folds into the SCP domain. 8 disulfides stabilise this stretch: C75-C153, C92-C167, C148-C164, C186-C193, C189-C198, C202-C235, C211-C229, and C220-C233. In terms of domain architecture, ShKT spans 202 to 235 (CTRENEFTNCDSLVQKSSCQDNYMKSKCPASCFC).

Belongs to the CRISP family. Forms a stable, non-covalent complex with SSP-2. As to expression, expressed by the venom gland.

The protein resides in the secreted. Blocks contraction of smooth muscle elicited by high potassium-induced depolarization. May target voltage-gated calcium channels (Cav) on smooth muscle. The protein is Cysteine-rich venom protein triflin of Protobothrops flavoviridis (Habu).